The chain runs to 1017 residues: Probable disease resistance protein RDL5 (1017 aa).

A coiled-coil region spans residues 25–52 (QGVEDQVTELKRDLNMLSSFLKDANAKK). The NB-ARC domain maps to 147–460 (KQREMRQKFS…AEGIFQPRHY (314 aa)). 190–197 (GMGGLGKT) is a binding site for ATP. 7 LRR repeats span residues 602-627 (LIHL…NLKL), 649-674 (MQEL…NLVK), 675-699 (LETL…RLST), 768-791 (PSHL…ILEK), 792-819 (LLQL…GFPQ), 841-865 (MPLL…HLPS), and 937-962 (MPFL…QFIY).

The protein belongs to the disease resistance NB-LRR family.

Potential disease resistance protein. This chain is Probable disease resistance protein RDL5 (RDL5), found in Arabidopsis thaliana (Mouse-ear cress).